Consider the following 302-residue polypeptide: Sulfate adenylyltransferase subunit 2 (302 aa).

The protein belongs to the PAPS reductase family. CysD subfamily. As to quaternary structure, heterodimer composed of CysD, the smaller subunit, and CysN.

The enzyme catalyses sulfate + ATP + H(+) = adenosine 5'-phosphosulfate + diphosphate. Its pathway is sulfur metabolism; hydrogen sulfide biosynthesis; sulfite from sulfate: step 1/3. Functionally, with CysN forms the ATP sulfurylase (ATPS) that catalyzes the adenylation of sulfate producing adenosine 5'-phosphosulfate (APS) and diphosphate, the first enzymatic step in sulfur assimilation pathway. APS synthesis involves the formation of a high-energy phosphoric-sulfuric acid anhydride bond driven by GTP hydrolysis by CysN coupled to ATP hydrolysis by CysD. This chain is Sulfate adenylyltransferase subunit 2, found in Yersinia pestis bv. Antiqua (strain Nepal516).